A 191-amino-acid polypeptide reads, in one-letter code: Casparian strip membrane protein 4 (191 aa).

The Cytoplasmic segment spans residues 1–27; it reads MKTGSVEAGEQASEDATPRRGKKLNRG. The chain crosses the membrane as a helical span at residues 28-48; sequence ILILDLVLRVFGAICTLGSAV. Residues 49-72 are Extracellular-facing; that stretch reads AMGTTSQTLPSSSQFFRFRAKYND. A helical transmembrane segment spans residues 73–93; sequence LPMFMFFAIANSIVCAYLVLS. Topologically, residues 94–110 are cytoplasmic; it reads LRLSIFHIIRSAGIITR. The chain crosses the membrane as a helical span at residues 111-131; the sequence is IILVTFDMVMLVLLTCGASAA. Topologically, residues 132-160 are extracellular; that stretch reads TSIVYLAHKGNASANWLPFCVRFSHFCNR. A glycan (N-linked (GlcNAc...) asparagine) is linked at N142. The helical transmembrane segment at 161–181 threads the bilayer; the sequence is ISGSLIGSFFSIIIFMLLVIL. Residues 182–191 are Cytoplasmic-facing; sequence SAVSQFSICN.

This sequence belongs to the Casparian strip membrane proteins (CASP) family. In terms of assembly, homodimer and heterodimers.

The protein localises to the cell membrane. Functionally, regulates membrane-cell wall junctions and localized cell wall deposition. Required for establishment of the Casparian strip membrane domain (CSD) and the subsequent formation of Casparian strips, a cell wall modification of the root endodermis that determines an apoplastic barrier between the intraorganismal apoplasm and the extraorganismal apoplasm and prevents lateral diffusion. The sequence is that of Casparian strip membrane protein 4 from Ricinus communis (Castor bean).